Here is a 178-residue protein sequence, read N- to C-terminus: Large ribosomal subunit protein uL6 (178 aa).

It belongs to the universal ribosomal protein uL6 family. As to quaternary structure, part of the 50S ribosomal subunit.

Functionally, this protein binds to the 23S rRNA, and is important in its secondary structure. It is located near the subunit interface in the base of the L7/L12 stalk, and near the tRNA binding site of the peptidyltransferase center. This Helicobacter pylori (strain G27) protein is Large ribosomal subunit protein uL6.